Here is a 280-residue protein sequence, read N- to C-terminus: Suppressor of disruption of TFIIS (280 aa).

This sequence belongs to the SSM1 family.

Could be an enzyme that inactivates 6-azauracil by modifying it. This Saccharomyces cerevisiae (strain ATCC 204508 / S288c) (Baker's yeast) protein is Suppressor of disruption of TFIIS (SDT1).